A 189-amino-acid chain; its full sequence is Stathmin-4 (189 aa).

2 S-palmitoyl cysteine lipidation sites follow: C20 and C22. An SLD domain is found at 48–189 (SDMEVIELNK…NKELKEEASR (142 aa)). Residues E54 and S90 each carry the phosphoserine modification. A coiled-coil region spans residues 90–189 (SLEEIQKKLE…NKELKEEASR (100 aa)). The disordered stretch occupies residues 168–189 (QEKDKHAEEVRKNKELKEEASR).

This sequence belongs to the stathmin family. In terms of tissue distribution, nervous tissue.

It localises to the golgi apparatus. It is found in the cell projection. The protein localises to the growth cone. The protein resides in the axon. Functionally, exhibits microtubule-destabilizing activity. This is Stathmin-4 (Stmn4) from Rattus norvegicus (Rat).